Consider the following 156-residue polypeptide: uncharacterized protein (156 aa).

Disordered stretches follow at residues 22–64 (KERV…VLKK) and 81–156 (AARA…DENE). The segment covering 43–56 (PEEDGDHSDKEDEQ) has biased composition (acidic residues). Phosphoserine is present on S50. K108 carries the post-translational modification N6-acetyllysine. The span at 121-134 (TKEEDEINKQDSVK) shows a compositional bias: basic and acidic residues. S148 carries the phosphoserine modification.

This is an uncharacterized protein from Bos taurus (Bovine).